A 284-amino-acid polypeptide reads, in one-letter code: L-ribulose-5-phosphate 3-epimerase UlaE (284 aa).

The protein belongs to the L-ribulose-5-phosphate 3-epimerase family.

It carries out the reaction L-ribulose 5-phosphate = L-xylulose 5-phosphate. The protein operates within cofactor degradation; L-ascorbate degradation; D-xylulose 5-phosphate from L-ascorbate: step 3/4. Catalyzes the isomerization of L-xylulose-5-phosphate to L-ribulose-5-phosphate. Is involved in the anaerobic L-ascorbate utilization. The protein is L-ribulose-5-phosphate 3-epimerase UlaE of Escherichia coli (strain ATCC 8739 / DSM 1576 / NBRC 3972 / NCIMB 8545 / WDCM 00012 / Crooks).